The sequence spans 964 residues: MDSETDTDTHSICNSVSSGENYKSPESSDCEGYATPLASSLTDISNVINHSVTIKVPDTIADANDLEPGERTPVSTPRAISPPIVKQVMYLQKPRILVMTQREIHEECCSSEEEFYDVDDVQIRDVAQQLLNGVSDDKTETEAGNNDVIIAEEDRADTPIVIEDTREFEETYSEEDERQTPIQMENATSEVSSSEDEISDSVVELTNDMMSKITEIEEIHAQVHSESFGSSDSGDHLEVKSEATNFPEYSNTEEFEVPKNDYVTVENVNESTIDSVVIDSQTPTKDTKNEVNISQNVVNLVRLESHLENYDDETTNTVIAECVYDAQENEKCEKNEEDDLSPVLDSNKIKNSPESKFCEFRAESECYEQTEETDQIKQFVPLMEVSVANQEFDELCDIERNGGNSKDRPKDLNENVKAFDAEHHENSVLEYEQLPDVFSEITIAKTPIPVVHENSISGVSKESQVSFNQEAVQNELMPTHIISDEVETSSTTADNNIPFSDCSTHKVKVDFDGYSSGKEESLSSSTSSESFEFAEPVTENHIQDERAQALRNSIIERYPSNDTDDDELDSVGDEFDEDLLAVKQISAEVEQLVAAINAFGRDEEQQMSAYMVGKKMAAEKKRKSAMDTTAMTSSCQDQTVQTDNNSFILVDRHVPEVMESLQVEIDRLQGDLEKVKSGEKELLQINSKLKEELEESQQTIDGIEIEAEQQYTELTSEIDELCEIVQRKDQELAILKEKVTNVINIENSLKDDVDSQKVIVQRQKEIIENLREELDAITKKLGEVTKLRDKAVEEATLYKMKNMERDRFLSREAQMSMEIEDLQRELNKQKLILNQTSMAKLADTFDRKVLHLENELRERDMLICKQNQIINSHRKSPTGSVITHRKMQPRASVLAAAGNLPSAGSSSESFQNGLDVEAREALLSFILSDRHNQLANIYNIGRILDLTPQEERSVERHLTKDRFT.

2 disordered regions span residues 1–31 (MDSETDTDTHSICNSVSSGENYKSPESSDCE) and 169–199 (EETYSEEDERQTPIQMENATSEVSSSEDEIS). Over residues 10–27 (HSICNSVSSGENYKSPES) the composition is skewed to polar residues. Positions 656 to 840 (EVMESLQVEI…LILNQTSMAK (185 aa)) form a coiled coil.

This is an uncharacterized protein from Caenorhabditis elegans.